Consider the following 692-residue polypeptide: Proprotein convertase subtilisin/kexin type 9 (692 aa).

An N-terminal signal peptide occupies residues 1–30; that stretch reads MGTVSSRRSWWPLPLPLLLLLLLGLAGARA. Residues 31–152 constitute a propeptide that is removed on maturation; sequence QEDEDGDYEE…IEEDSSVFAQ (122 aa). At Tyr38 the chain carries Sulfotyrosine. A Phosphoserine modification is found at Ser47. The Inhibitor I9 domain occupies 77 to 149; it reads TYVVVLKEET…VDYIEEDSSV (73 aa). The 290-residue stretch at 155 to 444 folds into the Peptidase S8 domain; it reads PWNLERITPA…VLTPNLVAAL (290 aa). Residues Asp186 and His226 each act as charge relay system in the active site. 2 cysteine pairs are disulfide-bonded: Cys223-Cys255 and Cys323-Cys358. The active-site Charge relay system is Ser386. The segment at 450–692 is C-terminal domain; that stretch reads RAGWQLFCRT…HLVQASQELQ (243 aa). 3 disulfides stabilise this stretch: Cys457/Cys527, Cys477/Cys526, and Cys486/Cys509. An N-linked (GlcNAc...) asparagine glycan is attached at Asn533. Intrachain disulfides connect Cys534-Cys601, Cys552-Cys600, Cys562-Cys588, Cys608-Cys679, Cys626-Cys678, and Cys635-Cys654. Position 688 is a phosphoserine (Ser688).

Belongs to the peptidase S8 family. In terms of assembly, monomer. Can self-associate to form dimers and higher multimers which may have increased LDLR degrading activity. The precursor protein but not the mature protein may form multimers. Interacts with APOB, VLDLR, LRP8/APOER2 and BACE1. The full-length immature form (pro-PCSK9) interacts with SCNN1A, SCNN1B and SCNN1G. The pro-PCSK9 form (via C-terminal domain) interacts with LDLR. Interacts (via the C-terminal domain) with ANXA2 (via repeat Annexin 1); the interaction inhibits the degradation of LDLR. It depends on Ca(2+) as a cofactor. In terms of processing, cleavage by furin and PCSK5 generates a truncated inactive protein that is unable to induce LDLR degradation. Undergoes autocatalytic cleavage in the endoplasmic reticulum to release the propeptide from the N-terminus and the cleavage of the propeptide is strictly required for its maturation and activation. The cleaved propeptide however remains associated with the catalytic domain through non-covalent interactions, preventing potential substrates from accessing its active site. As a result, it is secreted from cells as a propeptide-containing, enzymatically inactive protein. Post-translationally, phosphorylation protects the propeptide against proteolysis.

The protein resides in the cytoplasm. The protein localises to the secreted. Its subcellular location is the endosome. It localises to the lysosome. It is found in the cell surface. The protein resides in the endoplasmic reticulum. The protein localises to the golgi apparatus. Its activity is regulated as follows. Its proteolytic activity is autoinhibited by the non-covalent binding of the propeptide to the catalytic domain. Inhibited by EGTA. In terms of biological role, crucial player in the regulation of plasma cholesterol homeostasis. Binds to low-density lipid receptor family members: low density lipoprotein receptor (LDLR), very low density lipoprotein receptor (VLDLR), apolipoprotein E receptor (LRP1/APOER) and apolipoprotein receptor 2 (LRP8/APOER2), and promotes their degradation in intracellular acidic compartments. Acts via a non-proteolytic mechanism to enhance the degradation of the hepatic LDLR through a clathrin LDLRAP1/ARH-mediated pathway. May prevent the recycling of LDLR from endosomes to the cell surface or direct it to lysosomes for degradation. Can induce ubiquitination of LDLR leading to its subsequent degradation. Inhibits intracellular degradation of APOB via the autophagosome/lysosome pathway in a LDLR-independent manner. Involved in the disposal of non-acetylated intermediates of BACE1 in the early secretory pathway. Inhibits epithelial Na(+) channel (ENaC)-mediated Na(+) absorption by reducing ENaC surface expression primarily by increasing its proteasomal degradation. Regulates neuronal apoptosis via modulation of LRP8/APOER2 levels and related anti-apoptotic signaling pathways. This Colobus guereza (Mantled guereza) protein is Proprotein convertase subtilisin/kexin type 9 (PCSK9).